The following is a 619-amino-acid chain: Chaperone protein HscA homolog (619 aa).

It belongs to the heat shock protein 70 family.

Chaperone involved in the maturation of iron-sulfur cluster-containing proteins. Has a low intrinsic ATPase activity which is markedly stimulated by HscB. This Laribacter hongkongensis (strain HLHK9) protein is Chaperone protein HscA homolog.